Reading from the N-terminus, the 398-residue chain is 8-amino-7-oxononanoate synthase (398 aa).

Arg-23 is a substrate binding site. 110–111 (GY) is a binding site for pyridoxal 5'-phosphate. His-135 serves as a coordination point for substrate. Residues Ser-181, His-209, and Thr-237 each contribute to the pyridoxal 5'-phosphate site. At Lys-240 the chain carries N6-(pyridoxal phosphate)lysine. Thr-354 contacts substrate.

This sequence belongs to the class-II pyridoxal-phosphate-dependent aminotransferase family. BioF subfamily. In terms of assembly, homodimer. Pyridoxal 5'-phosphate is required as a cofactor.

It catalyses the reaction 6-carboxyhexanoyl-[ACP] + L-alanine + H(+) = (8S)-8-amino-7-oxononanoate + holo-[ACP] + CO2. It participates in cofactor biosynthesis; biotin biosynthesis. In terms of biological role, catalyzes the decarboxylative condensation of pimeloyl-[acyl-carrier protein] and L-alanine to produce 8-amino-7-oxononanoate (AON), [acyl-carrier protein], and carbon dioxide. The protein is 8-amino-7-oxononanoate synthase of Anaeromyxobacter dehalogenans (strain 2CP-1 / ATCC BAA-258).